The sequence spans 228 residues: Cytochrome c oxidase subunit 2 (228 aa).

The Mitochondrial intermembrane portion of the chain corresponds to 1-14 (MANHSQLGFQDASS). A helical transmembrane segment spans residues 15-45 (PIMEELVEFHDHALIVALAICSLVLYLLAHM). Topologically, residues 46–58 (LMEKLSSNAVDAQ) are mitochondrial matrix. A helical membrane pass occupies residues 59–86 (EVELIWTILPAIVLVLLALPSLQILYMM). Residues 87-228 (DEIDEPDLTL…ETWSSLLSAS (142 aa)) lie on the Mitochondrial intermembrane side of the membrane. Residues H160, C195, E197, C199, H203, and M206 each coordinate Cu cation. Residue E197 coordinates Mg(2+).

Belongs to the cytochrome c oxidase subunit 2 family. Component of the cytochrome c oxidase (complex IV, CIV), a multisubunit enzyme composed of 14 subunits. The complex is composed of a catalytic core of 3 subunits MT-CO1, MT-CO2 and MT-CO3, encoded in the mitochondrial DNA, and 11 supernumerary subunits COX4I, COX5A, COX5B, COX6A, COX6B, COX6C, COX7A, COX7B, COX7C, COX8 and NDUFA4, which are encoded in the nuclear genome. The complex exists as a monomer or a dimer and forms supercomplexes (SCs) in the inner mitochondrial membrane with NADH-ubiquinone oxidoreductase (complex I, CI) and ubiquinol-cytochrome c oxidoreductase (cytochrome b-c1 complex, complex III, CIII), resulting in different assemblies (supercomplex SCI(1)III(2)IV(1) and megacomplex MCI(2)III(2)IV(2)). Found in a complex with TMEM177, COA6, COX18, COX20, SCO1 and SCO2. Interacts with TMEM177 in a COX20-dependent manner. Interacts with COX20. Interacts with COX16. Requires Cu cation as cofactor.

The protein localises to the mitochondrion inner membrane. The catalysed reaction is 4 Fe(II)-[cytochrome c] + O2 + 8 H(+)(in) = 4 Fe(III)-[cytochrome c] + 2 H2O + 4 H(+)(out). Functionally, component of the cytochrome c oxidase, the last enzyme in the mitochondrial electron transport chain which drives oxidative phosphorylation. The respiratory chain contains 3 multisubunit complexes succinate dehydrogenase (complex II, CII), ubiquinol-cytochrome c oxidoreductase (cytochrome b-c1 complex, complex III, CIII) and cytochrome c oxidase (complex IV, CIV), that cooperate to transfer electrons derived from NADH and succinate to molecular oxygen, creating an electrochemical gradient over the inner membrane that drives transmembrane transport and the ATP synthase. Cytochrome c oxidase is the component of the respiratory chain that catalyzes the reduction of oxygen to water. Electrons originating from reduced cytochrome c in the intermembrane space (IMS) are transferred via the dinuclear copper A center (CU(A)) of subunit 2 and heme A of subunit 1 to the active site in subunit 1, a binuclear center (BNC) formed by heme A3 and copper B (CU(B)). The BNC reduces molecular oxygen to 2 water molecules using 4 electrons from cytochrome c in the IMS and 4 protons from the mitochondrial matrix. The polypeptide is Cytochrome c oxidase subunit 2 (MT-CO2) (Cairina moschata (Muscovy duck)).